A 175-amino-acid chain; its full sequence is Peptide deformylase (175 aa).

Cysteine 98 and histidine 140 together coordinate Fe cation. Glutamate 141 is an active-site residue. Fe cation is bound at residue histidine 144.

This sequence belongs to the polypeptide deformylase family. It depends on Fe(2+) as a cofactor.

The catalysed reaction is N-terminal N-formyl-L-methionyl-[peptide] + H2O = N-terminal L-methionyl-[peptide] + formate. Removes the formyl group from the N-terminal Met of newly synthesized proteins. Requires at least a dipeptide for an efficient rate of reaction. N-terminal L-methionine is a prerequisite for activity but the enzyme has broad specificity at other positions. This Bradyrhizobium sp. (strain ORS 278) protein is Peptide deformylase.